The following is a 250-amino-acid chain: MACWWPLLLELWTVMPTWAGDELLNICMNAKHHKRVPSPEDKLYEECIPWKDNACCTLTTSWEAHLDVSPLYNFSLFHCGLLMPGCRKHFIQAICFYECSPNLGPWIQPVGSLGWEVAPSGQGERVVNVPLCQEDCEEWWEDCRMSYTCKSNWRGGWDWSQGKNRCPKGAQCLPFSHYFPTPADLCEKTWSNSFKASPERRNSGRCLQKWFEPAQGNPNVAVARLFASSAPSWELSYTIMVCSLFLPFLS.

Residues 1–19 (MACWWPLLLELWTVMPTWA) form the signal peptide. 8 disulfides stabilise this stretch: C27/C55, C47/C95, C56/C99, C79/C172, C86/C143, C132/C206, C136/C186, and C149/C166. An important for interaction with IZUMO1 region spans residues 62 to 81 (WEAHLDVSPLYNFSLFHCGL). The N-linked (GlcNAc...) asparagine glycan is linked to N73. The GPI-anchor amidated serine moiety is linked to residue S228. A propeptide spanning residues 229–250 (SAPSWELSYTIMVCSLFLPFLS) is cleaved from the precursor.

It belongs to the folate receptor family. In terms of assembly, monomer. Interacts with IZUMO1; the interaction is direct. IZUMO1 and IZUMO1R/JUNO form a complex with 1:1 stoichiometry. Interacts with FCRL3/MAIA; FCRL3/MAIA replaces IZUMO1R/JUNO as IZUMO1 receptor after sperm-egg adhesion, thereby permitting species-specific gamete fusion. Interacts with WDR54. The protein is rapidly cleaved following fertilization, being only weakly detectable in zona-intact fertilized eggs at telophase II and undetectable at the pronuclear stage. Sheding is probably required to block to polyspermy and ensuring egg fusion with a single sperm. As to expression, expressed in unfertilized oocytes (at protein level).

The protein resides in the cell membrane. It is found in the cell projection. It localises to the microvillus membrane. Receptor for IZUMO1 present at the cell surface of oocytes (oolemma), which is essential for species-specific gamete recognition and fertilization. The IZUMO1:IZUMO1R/JUNO interaction is a necessary adhesion event between sperm and egg that is required for fertilization but is not sufficient for cell fusion. The ligand-receptor interaction probably does not act as a membrane 'fusogen'. Does not bind folate. The sequence is that of Sperm-egg fusion protein Juno from Homo sapiens (Human).